The primary structure comprises 273 residues: Dermonecrotic toxin LamSicTox-alphaIC1 (273 aa).

The active site involves His5. The Mg(2+) site is built by Glu25 and Asp27. The Nucleophile role is filled by His41. 2 cysteine pairs are disulfide-bonded: Cys45-Cys51 and Cys47-Cys190. Asp85 provides a ligand contact to Mg(2+).

It belongs to the arthropod phospholipase D family. Class II subfamily. Mg(2+) is required as a cofactor. As to expression, expressed by the venom gland.

The protein resides in the secreted. It carries out the reaction an N-(acyl)-sphingosylphosphocholine = an N-(acyl)-sphingosyl-1,3-cyclic phosphate + choline. It catalyses the reaction an N-(acyl)-sphingosylphosphoethanolamine = an N-(acyl)-sphingosyl-1,3-cyclic phosphate + ethanolamine. The enzyme catalyses a 1-acyl-sn-glycero-3-phosphocholine = a 1-acyl-sn-glycero-2,3-cyclic phosphate + choline. The catalysed reaction is a 1-acyl-sn-glycero-3-phosphoethanolamine = a 1-acyl-sn-glycero-2,3-cyclic phosphate + ethanolamine. Dermonecrotic toxins cleave the phosphodiester linkage between the phosphate and headgroup of certain phospholipids (sphingolipid and lysolipid substrates), forming an alcohol (often choline) and a cyclic phosphate. This toxin acts on sphingomyelin (SM). It may also act on ceramide phosphoethanolamine (CPE), lysophosphatidylcholine (LPC) and lysophosphatidylethanolamine (LPE), but not on lysophosphatidylserine (LPS), and lysophosphatidylglycerol (LPG). It acts by transphosphatidylation, releasing exclusively cyclic phosphate products as second products. Induces dermonecrosis, hemolysis, increased vascular permeability, edema, inflammatory response, and platelet aggregation. This Loxosceles amazonica (Recluse spider) protein is Dermonecrotic toxin LamSicTox-alphaIC1.